The primary structure comprises 1130 residues: Transmembrane channel-like protein 3 (1130 aa).

Topologically, residues 1 to 148 (MKTSKASQRY…ASYFIFLRWL (148 aa)) are cytoplasmic. The helical transmembrane segment at 149-169 (FGINIVLTVMTGAFVVLPELI) threads the bilayer. The Extracellular segment spans residues 170 to 192 (AGQPFGSTASKTIPREQITSAQD). Residues 193 to 213 (LDTVWSLGGYLQYSVLFYGYY) form a helical membrane-spanning segment. At 214–225 (GRERRIGRAGYR) the chain is on the cytoplasmic side. Residues 226 to 246 (LPLAYFLVGMAVFAYSFIVLL) traverse the membrane as a helical segment. The Extracellular segment spans residues 247-319 (KRMAKNSRTS…KNMAVTVCLR (73 aa)). N264 carries N-linked (GlcNAc...) asparagine glycosylation. The chain crosses the membrane as a helical span at residues 320 to 340 (IIANILVLLSLAGSIYLIYFV). Over 341-361 (VDRSQKLEQSKKELTLWEKNE) the chain is Cytoplasmic. The chain crosses the membrane as a helical span at residues 362 to 382 (VSVVVSLVTMLAPSAFDLIAA). The Extracellular segment spans residues 383–393 (LEMYHPRTTLR). The helical transmembrane segment at 394–414 (FQLARVLVLYLGNLYSLIIAL) threads the bilayer. Residues 415 to 509 (LDKVNSMNIE…CWETYVGQEM (95 aa)) are Cytoplasmic-facing. A helical transmembrane segment spans residues 510–530 (LKLSVIDMLFTVASILLIDFF). At 531–570 (RGLFVRYLSDYWCWDLESKFPEYGEFKIAENVLHLVYNQG) the chain is on the extracellular side. A helical membrane pass occupies residues 571–591 (MIWMGAFFSPCLPAFNVLKLI). The Cytoplasmic segment spans residues 592-619 (GLMYLRSWAVLTCNVPHQQVFRASRSNN). Residues 620–640 (FYLAMLLFMLFLCMLPTIFAI) traverse the membrane as a helical segment. Over 641 to 680 (VHYKPSLNCGPFSGQEKIYDIVSETIENDFPTWFHAVVGH) the chain is Extracellular. A helical membrane pass occupies residues 681–701 (ISSPVVILPAVLLLFMLIYYL). The Cytoplasmic segment spans residues 702–1130 (QSIARSLKLS…DLNDLICSNV (429 aa)). Disordered stretches follow at residues 742–774 (DARQAGSATEAESSENSKPKTLQARIQTHEESS), 819–893 (RSLP…FQPI), 999–1019 (SSCFYTGDRSENNTRDPKYQR), 1033–1059 (QLERPTFVHRKPRSRNGQYPQHALKAR), and 1097–1116 (QGRFPRSASQLGRRKAKSRQ). The segment covering 747-767 (GSATEAESSENSKPKTLQARI) has biased composition (polar residues). Over residues 840 to 850 (SRSRPEQDTNR) the composition is skewed to basic and acidic residues. The segment covering 856–876 (CSSTSNLHKNRSCSSVTQTQP) has biased composition (polar residues). Composition is skewed to basic and acidic residues over residues 878-890 (KDVRSEPLSRKDF) and 1006-1017 (DRSENNTRDPKY). Residues 1097-1106 (QGRFPRSASQ) are compositionally biased toward polar residues.

It belongs to the TMC family. As to expression, detected in most neuronal organs and also in some non-neuronal tissues.

The protein resides in the membrane. In terms of biological role, probable component of an ion channel. Molecular function hasn't been characterized yet. This is Transmembrane channel-like protein 3 from Mus musculus (Mouse).